Consider the following 171-residue polypeptide: Co-chaperone protein HscB homolog (171 aa).

In terms of domain architecture, J spans 3 to 75 (SHFALFDLEP…SQRARYLLSL (73 aa)).

The protein belongs to the HscB family. As to quaternary structure, interacts with HscA and stimulates its ATPase activity.

Functionally, co-chaperone involved in the maturation of iron-sulfur cluster-containing proteins. Seems to help targeting proteins to be folded toward HscA. The polypeptide is Co-chaperone protein HscB homolog (Azotobacter vinelandii).